Consider the following 448-residue polypeptide: Putative flavin-containing monooxygenase FMO GS-OX-like 10 (448 aa).

18–23 (GAGAAG) is a binding site for FAD. 212-217 (GSSVSG) contributes to the NADP(+) binding site.

This sequence belongs to the FMO family. It depends on FAD as a cofactor.

Its function is as follows. Catalyzes the conversion of methylthioalkyl glucosinolates of any chain length into methylsulfinylalkyl glucosinolates. This is Putative flavin-containing monooxygenase FMO GS-OX-like 10 from Arabidopsis thaliana (Mouse-ear cress).